The primary structure comprises 700 residues: DNA ligase 2 (700 aa).

Residues 42–46 (DDAYD) and 89–90 (SL) contribute to the NAD(+) site. The N6-AMP-lysine intermediate role is filled by Lys122. 4 residues coordinate NAD(+): Arg143, Glu177, Lys303, and Lys327. Residues Cys421, Cys424, Cys437, and Cys443 each contribute to the Zn(2+) site. The tract at residues 590 to 621 (MTEPGATPPRPADTDGADGATAEAPGDGGPLA) is disordered. Residues 615-700 (GDGGPLAGMK…FAVLVAGLLS (86 aa)) enclose the BRCT domain.

Belongs to the NAD-dependent DNA ligase family. LigA subfamily. Mg(2+) serves as cofactor. The cofactor is Mn(2+).

The enzyme catalyses NAD(+) + (deoxyribonucleotide)n-3'-hydroxyl + 5'-phospho-(deoxyribonucleotide)m = (deoxyribonucleotide)n+m + AMP + beta-nicotinamide D-nucleotide.. Functionally, DNA ligase that catalyzes the formation of phosphodiester linkages between 5'-phosphoryl and 3'-hydroxyl groups in double-stranded DNA using NAD as a coenzyme and as the energy source for the reaction. It is essential for DNA replication and repair of damaged DNA. This chain is DNA ligase 2, found in Streptomyces coelicolor (strain ATCC BAA-471 / A3(2) / M145).